We begin with the raw amino-acid sequence, 348 residues long: Protein RecA (348 aa).

64-71 (GPESSGKT) is a binding site for ATP.

Belongs to the RecA family.

It is found in the cytoplasm. In terms of biological role, can catalyze the hydrolysis of ATP in the presence of single-stranded DNA, the ATP-dependent uptake of single-stranded DNA by duplex DNA, and the ATP-dependent hybridization of homologous single-stranded DNAs. It interacts with LexA causing its activation and leading to its autocatalytic cleavage. The chain is Protein RecA from Blastochloris viridis (Rhodopseudomonas viridis).